A 115-amino-acid chain; its full sequence is ComG operon protein 5 (115 aa).

Residues 1–7 (MWRENKG) constitute a propeptide, leader sequence. F8 carries the N-methylphenylalanine modification. The chain crosses the membrane as a helical span at residues 13 to 31 (TMSALSLWLFVLLTVVPLW).

Processing of ComGE in competent cells requires ComC.

Its subcellular location is the cell membrane. The protein localises to the cell surface. In terms of biological role, required for transformation and DNA binding. This chain is ComG operon protein 5 (comGE), found in Bacillus subtilis (strain 168).